The sequence spans 261 residues: GTP cyclohydrolase FolE2 (261 aa).

It belongs to the GTP cyclohydrolase IV family.

The catalysed reaction is GTP + H2O = 7,8-dihydroneopterin 3'-triphosphate + formate + H(+). It functions in the pathway cofactor biosynthesis; 7,8-dihydroneopterin triphosphate biosynthesis; 7,8-dihydroneopterin triphosphate from GTP: step 1/1. Converts GTP to 7,8-dihydroneopterin triphosphate. This Fervidobacterium nodosum (strain ATCC 35602 / DSM 5306 / Rt17-B1) protein is GTP cyclohydrolase FolE2.